A 90-amino-acid chain; its full sequence is Acylphosphatase (90 aa).

One can recognise an Acylphosphatase-like domain in the interval 4–90; sequence RMYVKVYGIV…KGEFNNFDTY (87 aa). Catalysis depends on residues R19 and N37.

Belongs to the acylphosphatase family.

The catalysed reaction is an acyl phosphate + H2O = a carboxylate + phosphate + H(+). The chain is Acylphosphatase (acyP) from Sulfurisphaera tokodaii (strain DSM 16993 / JCM 10545 / NBRC 100140 / 7) (Sulfolobus tokodaii).